The following is a 335-amino-acid chain: Tryptophan--tRNA ligase (335 aa).

ATP contacts are provided by residues 9–11 and 17–18; these read QST and GN. The short motif at 10–18 is the 'HIGH' region element; that stretch reads STNSLTLGN. An L-tryptophan-binding site is contributed by Asp137. ATP contacts are provided by residues 149-151, Ile189, and 198-202; these read GKD and KMSKS. The short motif at 198–202 is the 'KMSKS' region element; it reads KMSKS.

It belongs to the class-I aminoacyl-tRNA synthetase family. Homodimer.

The protein localises to the cytoplasm. The catalysed reaction is tRNA(Trp) + L-tryptophan + ATP = L-tryptophyl-tRNA(Trp) + AMP + diphosphate + H(+). In terms of biological role, catalyzes the attachment of tryptophan to tRNA(Trp). The protein is Tryptophan--tRNA ligase of Malacoplasma penetrans (strain HF-2) (Mycoplasma penetrans).